We begin with the raw amino-acid sequence, 38 residues long: Potassium channel toxin alpha-KTx 3.7 (38 aa).

3 cysteine pairs are disulfide-bonded: C8–C28, C14–C33, and C18–C35.

It belongs to the short scorpion toxin superfamily. Potassium channel inhibitor family. Alpha-KTx 03 subfamily. In terms of tissue distribution, expressed by the venom gland.

The protein resides in the secreted. Blocks voltage-gated potassium channels Kv1.1/KCNA1 (IC(50)=0.6 nM), Kv1.2/KCNA2 (IC(50)=5.4 nM), Kv1.3/KCNA3 (IC(50)=0.014 nM) potently, and moderately block intermediate conductance calcium-activated potassium channels KCa3.1/KCNN4 (IC(50)=225 nM). Also shows activity on muscle-type nicotinic acetylcholine receptor (nAChR), since it reversibly and dose-dependently inhibits acetylcholine-induced current through mouse muscle-type nAChR heterologously expressed in Xenopus oocytes (IC(50)=1.6 uM). This chain is Potassium channel toxin alpha-KTx 3.7, found in Orthochirus scrobiculosus (Central Asian scorpion).